A 291-amino-acid polypeptide reads, in one-letter code: Segregation and condensation protein B (291 aa).

It belongs to the ScpB family. Homodimer. Homodimerization may be required to stabilize the binding of ScpA to the Smc head domains. Component of a cohesin-like complex composed of ScpA, ScpB and the Smc homodimer, in which ScpA and ScpB bind to the head domain of Smc. The presence of the three proteins is required for the association of the complex with DNA.

The protein localises to the cytoplasm. In terms of biological role, participates in chromosomal partition during cell division. May act via the formation of a condensin-like complex containing Smc and ScpA that pull DNA away from mid-cell into both cell halves. The sequence is that of Segregation and condensation protein B from Mycoplasmoides gallisepticum (strain R(low / passage 15 / clone 2)) (Mycoplasma gallisepticum).